A 259-amino-acid chain; its full sequence is 5'-nucleotidase SurE (259 aa).

A divalent metal cation is bound by residues Asp8, Asp9, Ser40, and Asn95.

Belongs to the SurE nucleotidase family. It depends on a divalent metal cation as a cofactor.

Its subcellular location is the cytoplasm. The enzyme catalyses a ribonucleoside 5'-phosphate + H2O = a ribonucleoside + phosphate. In terms of biological role, nucleotidase that shows phosphatase activity on nucleoside 5'-monophosphates. The protein is 5'-nucleotidase SurE of Oleidesulfovibrio alaskensis (strain ATCC BAA-1058 / DSM 17464 / G20) (Desulfovibrio alaskensis).